Reading from the N-terminus, the 326-residue chain is uncharacterized protein (326 aa).

Solcar repeat units lie at residues 20 to 107 (QDSN…CKKK), 120 to 219 (LTNT…LREF), and 231 to 322 (KSNL…VCDS). A run of 6 helical transmembrane segments spans residues 24 to 40 (IAFLAGGVAGAVSRTVV), 84 to 104 (GLNCIRIFPYSAVQFVVYEAC), 126 to 143 (LFSGALCGGCSVVATYPL), 195 to 213 (VWPTSLGVVPYVALNFAVY), 237 to 254 (LTIGAISGGVAQTITYPF), and 297 to 316 (GLAANLFKVVPSTAVSWLVY).

This sequence belongs to the mitochondrial carrier (TC 2.A.29) family.

The protein resides in the mitochondrion inner membrane. This is an uncharacterized protein from Saccharomyces cerevisiae (strain ATCC 204508 / S288c) (Baker's yeast).